Consider the following 950-residue polypeptide: MSKKRVHELGKQLKEQGIELSNQELVEKLHALGYLEVKSHSSSLEDDQAHAAYEKILAERKPKPAPARPSGPGFVVRKRAHVEPPTVTAPAAPPSPEPEYAEPQYAEPQAEQAYEPEPQAAQPEAGAEPAAAPEPPAEAAPLAAQAAPSPGAEAAAPAAPQAQPAQPAAPAAPPAPTAQPSAPPPAAAQPRPPQPSAPSRPPPPGYRPAPPPGARPPVSAAPGAPGQPGAAGQPPRPPVDPRTLRPTSTQAVVISRPLVPVRRVTPPTSARQQFPVAPGPRALGEVRELKVVPGSLGREREFIDVSRDKRRGRQPGRPISEEQAKSLSGKELLQAAISDRAYIPIRGKKKKPTKKGAKTQITEKAEHKKVIRIEESISVSELSQVMGVKASDLIRKLMQMGKMVTINAQIDADTAATLALEHGYTVEKKGFEVEEFIPEVEVDESKLVIRPPVVTVMGHVDHGKTSLLDAIRQADVAAGEAGGITQHIGAYSVNTPQGPITFLDTPGHEAFTAMRQRGAQVTDLVVLVVAADDGVMPQTVESIKAAKAAGVTILVAINKVDKPQAAPERVMQQLTEYELVAEQWGGTTIMLPVSARTKQGIPELLEYIALQSEVLELKANPDKLAAGRVIEAKLEKGRGPVATVLVEEGTLRVGDALVTGVHFGRVRAMMNERGEQVDNVGPGYPVEVLGLSGVPVAGDEFDVVEDEKAAKEVAQHRATKQRQKELGGVKKATLEDLFAKAKTSAQKVLNLVVKADVQGSSEAVSQALEKAATKKVGVKILESAVGAITKSDVLTAAAGNAVIVGFNTKPETEIENIASQQGVKILMFGIIYEAVDRIREEMAGLLEPIIKEKPLGKAEVRQVFNIPRVGQIAGSAVTEGVVKRAGHVRVVRDRKVVFTGKIGSLKRVKDDVREVAQGFECGIGVDGFSDVKQGDVLEVYELEEIRQSLD.

Disordered regions lie at residues 57–254 and 304–328; these read LAER…AVVI and DVSR…KSLS. 2 stretches are compositionally biased toward low complexity: residues 101 to 131 and 139 to 169; these read AEPQ…EPAA and AAPL…QPAA. Residues 170-215 are compositionally biased toward pro residues; the sequence is PAAPPAPTAQPSAPPPAAAQPRPPQPSAPSRPPPPGYRPAPPPGAR. Low complexity predominate over residues 216 to 233; that stretch reads PPVSAAPGAPGQPGAAGQ. One can recognise a tr-type G domain in the interval 449-618; the sequence is IRPPVVTVMG…ALQSEVLELK (170 aa). Residues 458–465 form a G1 region; that stretch reads GHVDHGKT. 458–465 is a binding site for GTP; it reads GHVDHGKT. The tract at residues 483 to 487 is G2; the sequence is GITQH. The G3 stretch occupies residues 504–507; sequence DTPG. GTP-binding positions include 504-508 and 558-561; these read DTPGH and NKVD. The tract at residues 558 to 561 is G4; it reads NKVD. The G5 stretch occupies residues 594 to 596; that stretch reads SAR.

It belongs to the TRAFAC class translation factor GTPase superfamily. Classic translation factor GTPase family. IF-2 subfamily.

It localises to the cytoplasm. In terms of biological role, one of the essential components for the initiation of protein synthesis. Protects formylmethionyl-tRNA from spontaneous hydrolysis and promotes its binding to the 30S ribosomal subunits. Also involved in the hydrolysis of GTP during the formation of the 70S ribosomal complex. This chain is Translation initiation factor IF-2, found in Anaeromyxobacter dehalogenans (strain 2CP-C).